The following is a 483-amino-acid chain: Cobyric acid synthase (483 aa).

The GATase cobBQ-type domain occupies 252–439 (KLNVVVPVLT…LHGFFDEAEA (188 aa)). The active-site Nucleophile is the Cys333. The active site involves His431.

The protein belongs to the CobB/CobQ family. CobQ subfamily.

Its pathway is cofactor biosynthesis; adenosylcobalamin biosynthesis. Its function is as follows. Catalyzes amidations at positions B, D, E, and G on adenosylcobyrinic A,C-diamide. NH(2) groups are provided by glutamine, and one molecule of ATP is hydrogenolyzed for each amidation. This chain is Cobyric acid synthase, found in Vibrio parahaemolyticus serotype O3:K6 (strain RIMD 2210633).